Reading from the N-terminus, the 405-residue chain is CMP-sialic acid transporter 4 (405 aa).

The Cytoplasmic segment spans residues 1–43 (MQRNGVMECSVCHSKVVAPSPRSVSRAYDKHRSKISSKYRALN). The chain crosses the membrane as a helical span at residues 44-64 (FLLVSGDCILVGLQPILVFMS). The Lumenal portion of the chain corresponds to 65–74 (KVDGKFQFSP). A helical transmembrane segment spans residues 75 to 95 (ISVNFLTEVTKVIFAIVMLII). Residues 96 to 121 (QSRKQKVGEKPLLSLSTFVQAARNNA) are Cytoplasmic-facing. A helical membrane pass occupies residues 122 to 142 (LLAVPALLYAINNYLKFIMQL). Residue Tyr-143 is a topological domain, lumenal. A helical membrane pass occupies residues 144 to 164 (FSPATVKMLSNLKVLVIAILL). Residues 165-171 (KFIMRRK) are Cytoplasmic-facing. The chain crosses the membrane as a helical span at residues 172–192 (FSIIQWEALALLLIGISVNQL). Residues 193–203 (SSIPDGTKSFG) are Lumenal-facing. A helical transmembrane segment spans residues 204–224 (LAVTTIAYIYTLIFVTVPSLA). Residues 225–244 (SVYNEYALKSQFDTSIYLQN) are Cytoplasmic-facing. Residues 245 to 265 (LFLYGYGAIFNFLGILGTVIF) form a helical membrane-spanning segment. Over 266–281 (QGPESFDILQGHSRAT) the chain is Lumenal. Residues 282 to 302 (MFLICNNAAQGILSSFFFKYA) form a helical membrane-spanning segment. Residues 303–322 (DTILKKYSSTVATIFTGLAS) lie on the Cytoplasmic side of the membrane. Residues 323–343 (AAFLGHTLTVNFLLGISIVFI) form a helical membrane-spanning segment. Over 344–405 (SMHQFFSPLA…TDERKPLLPI (62 aa)) the chain is Lumenal. The interval 386 to 405 (AADDASHLTSTDERKPLLPI) is disordered. Residues 389 to 405 (DASHLTSTDERKPLLPI) show a composition bias toward basic and acidic residues.

Belongs to the nucleotide-sugar transporter family. CMP-Sialate:CMP antiporter (TC 2.A.7.12) subfamily.

The protein resides in the golgi apparatus membrane. Sugar transporter involved in the transport of CMP-sialic acid from the cytoplasm into the Golgi. May transport important nucleotide sugars such as CMP-Kdo (2-keto-3-deoxy-D-manno-octulosonic acid) in physiological conditions. This Oryza sativa subsp. indica (Rice) protein is CMP-sialic acid transporter 4.